The following is a 368-amino-acid chain: N-acetylneuraminate epimerase (368 aa).

Residues 1–19 form the signal peptide; sequence MNKTIMALAIMMASFAANA. Kelch repeat units follow at residues 40-84, 86-137, 139-173, 174-219, 222-265, 287-336, and 338-367; these read TVYI…AFID, NLYV…FVHN, KAYV…KINA, HYFD…VNKG, TWLI…VAGG, ENYQ…PWNN, and LLII…VTVQ. The Proton acceptor role is filled by glutamate 228.

The protein belongs to the NanM family. As to quaternary structure, homodimer.

The protein localises to the periplasm. The catalysed reaction is N-acetyl-alpha-neuraminate = N-acetyl-beta-neuraminate. Its function is as follows. Converts alpha-N-acetylneuranimic acid (Neu5Ac) to the beta-anomer, accelerating the equilibrium between the alpha- and beta-anomers. Probably facilitates sialidase-negative bacteria to compete successfully for limited amounts of extracellular Neu5Ac, which is likely taken up in the beta-anomer. In addition, the rapid removal of sialic acid from solution might be advantageous to the bacterium to damp down host responses. The chain is N-acetylneuraminate epimerase from Shigella sonnei (strain Ss046).